The following is an 89-amino-acid chain: MAATQSEIRYLTPPSVDVKKKKYCRFKKNGIKYIDYKDPEFLKKFLNEQGKILPRRITGTSLKFQRRVAQAVKRARHLALLPYVTDLMK.

It belongs to the bacterial ribosomal protein bS18 family. In terms of assembly, part of the 30S ribosomal subunit. Forms a tight heterodimer with protein bS6.

Binds as a heterodimer with protein bS6 to the central domain of the 16S rRNA, where it helps stabilize the platform of the 30S subunit. The sequence is that of Small ribosomal subunit protein bS18 from Parabacteroides distasonis (strain ATCC 8503 / DSM 20701 / CIP 104284 / JCM 5825 / NCTC 11152).